The following is a 277-amino-acid chain: Pantothenate synthetase (277 aa).

26 to 33 (MGNLHAGH) lines the ATP pocket. The active-site Proton donor is histidine 33. (R)-pantoate is bound at residue glutamine 57. A beta-alanine-binding site is contributed by glutamine 57. Residue 143-146 (GEKD) coordinates ATP. Residue glutamine 149 coordinates (R)-pantoate. ATP contacts are provided by residues valine 172 and 180–183 (LSSR).

Belongs to the pantothenate synthetase family. Homodimer.

The protein resides in the cytoplasm. It catalyses the reaction (R)-pantoate + beta-alanine + ATP = (R)-pantothenate + AMP + diphosphate + H(+). Its pathway is cofactor biosynthesis; (R)-pantothenate biosynthesis; (R)-pantothenate from (R)-pantoate and beta-alanine: step 1/1. Functionally, catalyzes the condensation of pantoate with beta-alanine in an ATP-dependent reaction via a pantoyl-adenylate intermediate. The sequence is that of Pantothenate synthetase from Nitrosomonas europaea (strain ATCC 19718 / CIP 103999 / KCTC 2705 / NBRC 14298).